A 325-amino-acid chain; its full sequence is Elongation factor P--(R)-beta-lysine ligase (325 aa).

76–78 (SPE) lines the substrate pocket. ATP contacts are provided by residues 100-102 (RNE) and asparagine 109. Tyrosine 118 is a binding site for substrate. An ATP-binding site is contributed by 244-245 (EL). Glutamate 251 provides a ligand contact to substrate. Residue glycine 300 participates in ATP binding.

This sequence belongs to the class-II aminoacyl-tRNA synthetase family. EpmA subfamily. In terms of assembly, homodimer.

The enzyme catalyses D-beta-lysine + L-lysyl-[protein] + ATP = N(6)-((3R)-3,6-diaminohexanoyl)-L-lysyl-[protein] + AMP + diphosphate + H(+). Functionally, with EpmB is involved in the beta-lysylation step of the post-translational modification of translation elongation factor P (EF-P) on 'Lys-34'. Catalyzes the ATP-dependent activation of (R)-beta-lysine produced by EpmB, forming a lysyl-adenylate, from which the beta-lysyl moiety is then transferred to the epsilon-amino group of EF-P 'Lys-34'. The chain is Elongation factor P--(R)-beta-lysine ligase from Salmonella arizonae (strain ATCC BAA-731 / CDC346-86 / RSK2980).